Reading from the N-terminus, the 973-residue chain is Nuclear factor NF-kappa-B p105 subunit (973 aa).

The region spanning 38–245 (ADGPYLQILE…DAIYDSKAPN (208 aa)) is the RHD domain. Cys60 is subject to S-nitrosocysteine; alternate. Cys60 carries S-(15-deoxy-Delta12,14-prostaglandin J2-9-yl)cysteine; alternate lipidation. A Glycyl lysine isopeptide (Lys-Gly) (interchain with G-Cter in SUMO2) cross-link involves residue Lys324. Ser336 carries the phosphoserine modification. Residues 359–364 (QRKRQK) carry the Nuclear localization signal motif. Residues 371–394 (DSFGGGSGAGAGGGGMFGSGGGGG) are GRR. The interval 434–467 (TINTKFKNEPRDCAKSDDREILNPPEKETQGEGP) is disordered. The interaction with CFLAR stretch occupies residues 435–973 (INTKFKNEPR…GQDGPIEGKI (539 aa)). The segment covering 439-463 (FKNEPRDCAKSDDREILNPPEKETQ) has biased composition (basic and acidic residues). Lys440 carries the post-translational modification N6-acetyllysine. Ser449 carries the phosphoserine modification. ANK repeat units follow at residues 540–570 (NGDS…SISD), 579–608 (LYQT…DLSL), 612–641 (WGNS…AALL), 648–677 (EGLN…EVNA), 682–711 (SGRT…ALVD), and 716–745 (DGTT…DPLV). Residues 648–682 (EGLNAIHIAVMSNSLSCLQLLVAAGAEVNAQEQKS) form an essential for interaction with HIF1AN region. Asn676 bears the (3S)-3-hydroxyasparagine; by HIF1AN mark. Ser757 carries the phosphoserine modification. One copy of the ANK 7 repeat lies at 769–799 (PGTTPLDMAANWQVFDILNGKPYEPVFTSDD). The region spanning 803–890 (QGDIKQLTED…EAIEVIQAAF (88 aa)) is the Death domain. Position 898 is a phosphoserine (Ser898). Ser912 carries the post-translational modification Phosphoserine; by GSK3-beta; in vitro. Ser928 is modified (phosphoserine). A phosphoserine; by IKKB mark is found at Ser932 and Ser937. Ser942 bears the Phosphoserine mark. Thr948 is modified (phosphothreonine).

Component of the NF-kappa-B p65-p50 complex. Homodimer; component of the NF-kappa-B p50-p50 complex. Component of the NF-kappa-B p105-p50 complex. Component of the NF-kappa-B p50-c-Rel complex. Component of a complex consisting of the NF-kappa-B p50-p50 homodimer and BCL3. Also interacts with MAP3K8. NF-kappa-B p50 subunit interacts with NCOA3 coactivator, which may coactivate NF-kappa-B dependent expression via its histone acetyltransferase activity. Interacts with TSC22D3; this interaction prevents nuclear translocation and DNA-binding. Interacts with SPAG9 and UNC5CL. NFKB1/p105 interacts with CFLAR; the interaction inhibits p105 processing into p50. NFKB1/p105 forms a ternary complex with MAP3K8 and TNIP2. Interacts with GSK3B; the interaction prevents processing of p105 to p50. NFKB1/p50 interacts with NFKBIE. NFKB1/p50 interacts with NFKBIZ. Nuclear factor NF-kappa-B p50 subunit interacts with NFKBID. Directly interacts with MEN1. Interacts with HIF1AN. Interacts with FEM1A; interaction is direct. Post-translationally, generation of the NF-kappa-B p50 (Nuclear factor NF-kappa-B p50 subunit) transcription factor takes place both cotranslationally and post-translationally via non-mutually exclusive mechanisms. A cotranslational processing allows the production of both p50 and p105 (Nuclear factor NF-kappa-B p105 subunit) from a single NFKB1 mRNA. While translation occurs, the particular unfolded structure after the GRR repeat region acts as a substrate for the proteasome, promoting degradation of the C-terminus. The GRR acts as a proteasomal 'stop signal', protecting the region upstream of the GRR from degradation and promoting generation of p50. It is unclear if limited proteasome degradation during cotranslational processing depends on ubiquitination. NF-kappa-B p50 is also generated post-translationally following ubiquitination by the KPC complex, leading to limited processing by the proteasome downstream of the GRR region, thereby generating p50. Phosphorylation at the C-terminus by IKBKB/IKKB acts as a signal for ubiquitination and promotes either complete degradation or processing to generate the NF-kappa-B p50 (Nuclear factor NF-kappa-B p50 subunit). Phosphorylation at Ser-912 primes p105 for proteolytic processing in response to TNF-alpha stimulation. Phosphorylation at Ser-928, Ser-932 and Ser-937 are required for BTRC/BTRCP-mediated ubiquitination and proteolysis. Phosphorylation at Ser-932 is also required for ubiquitination by the KPC complex and limited processing to generate NF-kappa-B p50 (Nuclear factor NF-kappa-B p50 subunit). In terms of processing, polyubiquitinated at multiple Lys residues in the C-terminus. Polyubiquitinated by the SCF(FBXW11) and SCF(BTRC) complexes following phosphorylation at Ser-928, Ser-932 and Ser-937, leading to its complete degradation. In contrast, polyubiquitination by the KPC complex following phosphorylation at Ser-932 leads to limited proteosomal processing and generation of the active NF-kappa-B p50 (Nuclear factor NF-kappa-B p50 subunit). Post-translationally, S-nitrosylation of Cys-60 affects DNA binding. The covalent modification of cysteine by 15-deoxy-Delta12,14-prostaglandin-J2 is autocatalytic and reversible. It may occur as an alternative to other cysteine modifications, such as S-nitrosylation and S-palmitoylation.

It is found in the cytoplasm. The protein resides in the nucleus. In terms of biological role, NF-kappa-B is a pleiotropic transcription factor present in almost all cell types and is the endpoint of a series of signal transduction events that are initiated by a vast array of stimuli related to many biological processes such as inflammation, immunity, differentiation, cell growth, tumorigenesis and apoptosis. NF-kappa-B is a homo- or heterodimeric complex formed by the Rel-like domain-containing proteins RELA/p65, RELB, NFKB1/p105, NFKB1/p50, REL and NFKB2/p52 and the heterodimeric p65-p50 complex appears to be most abundant one. The dimers bind at kappa-B sites in the DNA of their target genes and the individual dimers have distinct preferences for different kappa-B sites that they can bind with distinguishable affinity and specificity. Different dimer combinations act as transcriptional activators or repressors, respectively. NF-kappa-B is controlled by various mechanisms of post-translational modification and subcellular compartmentalization as well as by interactions with other cofactors or corepressors. NF-kappa-B complexes are held in the cytoplasm in an inactive state complexed with members of the NF-kappa-B inhibitor (I-kappa-B) family. In a conventional activation pathway, I-kappa-B is phosphorylated by I-kappa-B kinases (IKKs) in response to different activators, subsequently degraded thus liberating the active NF-kappa-B complex which translocates to the nucleus. NF-kappa-B heterodimeric p65-p50 and RelB-p50 complexes are transcriptional activators. The NF-kappa-B p50-p50 homodimer is a transcriptional repressor, but can act as a transcriptional activator when associated with BCL3. NFKB1 appears to have dual functions such as cytoplasmic retention of attached NF-kappa-B proteins by p105 and generation of p50 by a cotranslational processing. The proteasome-mediated process ensures the production of both p50 and p105 and preserves their independent function, although processing of NFKB1/p105 also appears to occur post-translationally. p50 binds to the kappa-B consensus sequence 5'-GGRNNYYCC-3', located in the enhancer region of genes involved in immune response and acute phase reactions. In a complex with MAP3K8, NFKB1/p105 represses MAP3K8-induced MAPK signaling; active MAP3K8 is released by proteasome-dependent degradation of NFKB1/p105. Functionally, P105 is the precursor of the active p50 subunit (Nuclear factor NF-kappa-B p50 subunit) of the nuclear factor NF-kappa-B. Acts as a cytoplasmic retention of attached NF-kappa-B proteins by p105. Constitutes the active form, which associates with RELA/p65 to form the NF-kappa-B p65-p50 complex to form a transcription factor. Together with RELA/p65, binds to the kappa-B consensus sequence 5'-GGRNNYYCC-3', located in the enhancer region of genes involved in immune response and acute phase reactions. In Rattus norvegicus (Rat), this protein is Nuclear factor NF-kappa-B p105 subunit (Nfkb1).